Consider the following 934-residue polypeptide: 2-oxoglutarate dehydrogenase E1 component (934 aa).

This sequence belongs to the alpha-ketoglutarate dehydrogenase family. In terms of assembly, homodimer. Part of the 2-oxoglutarate dehydrogenase (OGDH) complex composed of E1 (2-oxoglutarate dehydrogenase), E2 (dihydrolipoamide succinyltransferase) and E3 (dihydrolipoamide dehydrogenase); the complex contains multiple copies of the three enzymatic components (E1, E2 and E3). The cofactor is thiamine diphosphate.

It carries out the reaction N(6)-[(R)-lipoyl]-L-lysyl-[protein] + 2-oxoglutarate + H(+) = N(6)-[(R)-S(8)-succinyldihydrolipoyl]-L-lysyl-[protein] + CO2. In terms of biological role, E1 component of the 2-oxoglutarate dehydrogenase (OGDH) complex which catalyzes the decarboxylation of 2-oxoglutarate, the first step in the conversion of 2-oxoglutarate to succinyl-CoA and CO(2). This chain is 2-oxoglutarate dehydrogenase E1 component (sucA), found in Coxiella burnetii (strain RSA 493 / Nine Mile phase I).